A 335-amino-acid polypeptide reads, in one-letter code: Succinylglutamate desuccinylase (335 aa).

3 residues coordinate Zn(2+): histidine 59, glutamate 62, and histidine 151. The active site involves glutamate 215.

The protein belongs to the AspA/AstE family. Succinylglutamate desuccinylase subfamily. Requires Zn(2+) as cofactor.

It carries out the reaction N-succinyl-L-glutamate + H2O = L-glutamate + succinate. Its pathway is amino-acid degradation; L-arginine degradation via AST pathway; L-glutamate and succinate from L-arginine: step 5/5. Functionally, transforms N(2)-succinylglutamate into succinate and glutamate. The polypeptide is Succinylglutamate desuccinylase (Pseudomonas syringae pv. tomato (strain ATCC BAA-871 / DC3000)).